The following is a 280-amino-acid chain: Protein YIP4b (280 aa).

Over residues 1-15 (MSHNDTIPLYQSSQS) the composition is skewed to polar residues. The tract at residues 1 to 106 (MSHNDTIPLY…SGFGSPPNTL (106 aa)) is disordered. Over 1 to 146 (MSHNDTIPLY…DPGKALRDWD (146 aa)) the chain is Cytoplasmic. The helical transmembrane segment at 147–167 (LWGPFFFIVFLGLTLSWSASV) threads the bilayer. Residues 168 to 171 (KKSE) lie on the Lumenal side of the membrane. 2 helical membrane passes run 172–192 (VFAVAFALLAAGAVILTLNVL) and 193–213 (LLGGHIIFFQSLSLLGYCLFP). Topologically, residues 214 to 230 (LDVGAVICMLKDNVILK) are lumenal. Residues 231–251 (MVVVSVTLAWSSWAAYPFMSA) form a helical membrane-spanning segment. Residues 252-258 (AVNPRRK) are Cytoplasmic-facing. The helical transmembrane segment at 259 to 279 (ALALYPVFLMYVSVGFLIIAI) threads the bilayer. Asn-280 is a topological domain (lumenal).

This sequence belongs to the YIP1 family. Homodimer and heterodimer with YIP4A. Component of a trans-Golgi network (TGN)-localized ECH/YIP4 complex made of ECH, YIP4A and YIP4B. Interacts directly with ECH. Expressed in developing root hair cells.

The protein localises to the golgi apparatus. It is found in the trans-Golgi network membrane. Its function is as follows. Together with YIP4A, involved in the regulation of cell elongation during root and hypocotyl growth. YIP4A and YIP4B are central trafficking components in Rho-of-plant (ROPs, e.g. ARAC4/ROP2, ARAC5/ROP4 and ARAC3/ROP6) small GTPases-dependent root hair formation, thus contributing to activation and plasma membrane accumulation of ROPs during hair initiation. The ECH/YIP4 complex is involved in the modulation of the trans-Golgi network (TGN)-mediated trafficking of some proteins and cell wall components (e.g. pectin and hemicellulose) to the cell wall in dark-grown hypocotyls and in secretory cells of the seed coat. The sequence is that of Protein YIP4b from Arabidopsis thaliana (Mouse-ear cress).